We begin with the raw amino-acid sequence, 191 residues long: MNIILLGPPGAGKGTQAGILVKDRGMVQLSTGDMLRAARTSGTEMGNLVAGVMDRGELVTDEIVIGLIREQLEAGGSGFIFDGFPRTLAQADALADLLAEVGQTLDHVIAMEVNDEALVGRIVNRAKEAAAAGQPVRADDNEESLKIRLMEYYKKTSPLLGYYHAKEQLRWVPGLGAIDDVAKGIADVLDA.

10–15 (GAGKGT) provides a ligand contact to ATP. The NMP stretch occupies residues 30–59 (STGDMLRAARTSGTEMGNLVAGVMDRGELV). AMP is bound by residues threonine 31, arginine 36, 57 to 59 (ELV), 83 to 86 (GFPR), and glutamine 90. An LID region spans residues 124-140 (NRAKEAAAAGQPVRADD). Position 125 (arginine 125) interacts with ATP. Positions 137 and 148 each coordinate AMP. Position 176 (glycine 176) interacts with ATP.

The protein belongs to the adenylate kinase family. As to quaternary structure, monomer.

The protein resides in the cytoplasm. It catalyses the reaction AMP + ATP = 2 ADP. It participates in purine metabolism; AMP biosynthesis via salvage pathway; AMP from ADP: step 1/1. In terms of biological role, catalyzes the reversible transfer of the terminal phosphate group between ATP and AMP. Plays an important role in cellular energy homeostasis and in adenine nucleotide metabolism. The chain is Adenylate kinase from Jannaschia sp. (strain CCS1).